Reading from the N-terminus, the 166-residue chain is Dynein regulatory complex protein 8 (166 aa).

The EF-hand domain occupies 95-130; it reads DDYHTLLRAFRAFDPDGRGFIDAESFKSLLTGKGEA.

Belongs to the DRC8 family. Component of the nexin-dynein regulatory complex (N-DRC).

It is found in the cytoplasm. It localises to the cytoskeleton. The protein resides in the flagellum axoneme. In terms of biological role, component of the nexin-dynein regulatory complex (N-DRC), a key regulator of ciliary/flagellar motility which maintains the alignment and integrity of the distal axoneme and regulates microtubule sliding in motile axonemes. The polypeptide is Dynein regulatory complex protein 8 (Chlamydomonas reinhardtii (Chlamydomonas smithii)).